A 203-amino-acid polypeptide reads, in one-letter code: Shikimate kinase (203 aa).

ATP is bound at residue 38–43 (GAGKST). Ser-42 lines the Mg(2+) pocket. Asp-60, Arg-84, and Gly-106 together coordinate substrate. Arg-144 provides a ligand contact to ATP. Arg-163 serves as a coordination point for substrate.

This sequence belongs to the shikimate kinase family. In terms of assembly, monomer. Mg(2+) serves as cofactor.

It is found in the cytoplasm. The catalysed reaction is shikimate + ATP = 3-phosphoshikimate + ADP + H(+). It functions in the pathway metabolic intermediate biosynthesis; chorismate biosynthesis; chorismate from D-erythrose 4-phosphate and phosphoenolpyruvate: step 5/7. Its function is as follows. Catalyzes the specific phosphorylation of the 3-hydroxyl group of shikimic acid using ATP as a cosubstrate. The sequence is that of Shikimate kinase from Rhodopseudomonas palustris (strain ATCC BAA-98 / CGA009).